Reading from the N-terminus, the 261-residue chain is MAAAVRSVKGLVAVITGGASGLGLSTAKRLVGQGATAVLLDVPNSEGETEAKKLGGNCIFAPANVTSEKEVQAALTLAKEKFGRIDVAVNCAGIAVAIKTYHEKKNQVHTLEDFQRVINVNLIGTFNVIRLVAGVMGQNEPDQGGQRGVIINTASVAAFEGQVGQAAYSASKGGIVGMTLPIARDLAPIGIRVVTIAPGLFATPLLTTLPDKVRNFLASQVPFPSRLGDPAEYAHLVQMVIENPFLNGEVIRLDGAIRMQP.

N-acetylalanine is present on alanine 2. NAD(+)-binding residues include serine 20, leucine 22, and aspartate 41. An N6-acetyllysine; alternate modification is found at lysine 53. An N6-succinyllysine; alternate modification is found at lysine 53. Valine 65 serves as a coordination point for NAD(+). Lysine 69 is modified (N6-acetyllysine). Residue cysteine 91 participates in NAD(+) binding. 2 positions are modified to N6-acetyllysine: lysine 99 and lysine 105. Position 155 (serine 155) interacts with substrate. NAD(+)-binding residues include tyrosine 168, lysine 172, phenylalanine 201, and threonine 203. Tyrosine 168 serves as the catalytic Proton acceptor. Lysine 212 is modified (N6-acetyllysine; alternate). Lysine 212 is modified (N6-succinyllysine; alternate).

Belongs to the short-chain dehydrogenases/reductases (SDR) family. Homotetramer. Component of mitochondrial ribonuclease P, a complex composed of TRMT10C/MRPP1, HSD17B10/MRPP2 and PRORP/MRPP3. Interacts with TRMT10C/MRPP1; forming the MRPP1-MRPP2 subcomplex of the mitochondrial ribonuclease P complex.

Its subcellular location is the mitochondrion. The protein localises to the mitochondrion matrix. It is found in the mitochondrion nucleoid. It catalyses the reaction a (3S)-3-hydroxyacyl-CoA + NAD(+) = a 3-oxoacyl-CoA + NADH + H(+). The enzyme catalyses (2S,3S)-3-hydroxy-2-methylbutanoyl-CoA + NAD(+) = 2-methyl-3-oxobutanoyl-CoA + NADH + H(+). It carries out the reaction testosterone + NAD(+) = androst-4-ene-3,17-dione + NADH + H(+). The catalysed reaction is 5alpha-androstane-3alpha,17beta-diol + NAD(+) = 17beta-hydroxy-5alpha-androstan-3-one + NADH + H(+). It catalyses the reaction 17beta-estradiol + NAD(+) = estrone + NADH + H(+). The enzyme catalyses cholate + NAD(+) = 3alpha,12alpha-dihydroxy-7-oxo-5beta-cholanate + NADH + H(+). It carries out the reaction (3S)-3-hydroxybutanoyl-CoA + NAD(+) = acetoacetyl-CoA + NADH + H(+). The catalysed reaction is (3S)-hydroxyoctanoyl-CoA + NAD(+) = 3-oxooctanoyl-CoA + NADH + H(+). It catalyses the reaction (3S)-hydroxyhexadecanoyl-CoA + NAD(+) = 3-oxohexadecanoyl-CoA + NADH + H(+). The enzyme catalyses 17beta-hydroxy-5alpha-androstan-3-one + NAD(+) = 5alpha-androstan-3,17-dione + NADH + H(+). It carries out the reaction 5alpha-pregnan-20beta-ol-3-one + NAD(+) = 5alpha-pregnane-3,20-dione + NADH + H(+). The catalysed reaction is 3alpha-hydroxy-5alpha-pregnan-20-one + NAD(+) = 5alpha-pregnane-3,20-dione + NADH + H(+). It catalyses the reaction cortisone + NAD(+) = 17alpha-hydroxypregn-4-en-3,11,20-trione-21-al + NADH + H(+). The enzyme catalyses 11-dehydrocorticosterone + NAD(+) = pregn-4-ene-3,11,20,21-tetraone + NADH + H(+). It carries out the reaction cortisol + NAD(+) = 11beta,17alpha-dihydroxypregn-4-ene-3,20,21-trione + NADH + H(+). The catalysed reaction is chenodeoxycholate + NAD(+) = 7-oxolithocholate + NADH + H(+). It catalyses the reaction ursodeoxycholate + NAD(+) = 7-oxolithocholate + NADH + H(+). The enzyme catalyses 3beta,7beta-dihydroxy-5beta-cholan-24-oate + NAD(+) = 3beta-hydroxy-7-oxo-5beta-cholan-24-oate + NADH + H(+). Its pathway is amino-acid degradation; L-isoleucine degradation. It functions in the pathway lipid metabolism; fatty acid beta-oxidation. It participates in steroid metabolism. The protein operates within lipid metabolism; bile acid biosynthesis. Functionally, mitochondrial dehydrogenase involved in pathways of fatty acid, branched-chain amino acid and steroid metabolism. Acts as (S)-3-hydroxyacyl-CoA dehydrogenase in mitochondrial fatty acid beta-oxidation, a major degradation pathway of fatty acids. Catalyzes the third step in the beta-oxidation cycle, namely the reversible conversion of (S)-3-hydroxyacyl-CoA to 3-ketoacyl-CoA. Preferentially accepts straight medium- and short-chain acyl-CoA substrates with highest efficiency for (3S)-hydroxybutanoyl-CoA. Acts as 3-hydroxy-2-methylbutyryl-CoA dehydrogenase in branched-chain amino acid catabolic pathway. Catalyzes the oxidation of 3-hydroxy-2-methylbutanoyl-CoA into 2-methyl-3-oxobutanoyl-CoA, a step in isoleucine degradation pathway. Has hydroxysteroid dehydrogenase activity toward steroid hormones and bile acids. Catalyzes the oxidation of 3alpha-, 17beta-, 20beta- and 21-hydroxysteroids and 7alpha- and 7beta-hydroxy bile acids. Oxidizes allopregnanolone/brexanolone at the 3alpha-hydroxyl group, which is known to be critical for the activation of gamma-aminobutyric acid receptors (GABAARs) chloride channel. Has phospholipase C-like activity toward cardiolipin and its oxidized species. Likely oxidizes the 2'-hydroxyl in the head group of cardiolipin to form a ketone intermediate that undergoes nucleophilic attack by water and fragments into diacylglycerol, dihydroxyacetone and orthophosphate. Has higher affinity for cardiolipin with oxidized fatty acids and may degrade these species during the oxidative stress response to protect cells from apoptosis. By interacting with intracellular amyloid-beta, it may contribute to the neuronal dysfunction associated with Alzheimer disease (AD). Essential for structural and functional integrity of mitochondria. In addition to mitochondrial dehydrogenase activity, moonlights as a component of mitochondrial ribonuclease P, a complex that cleaves tRNA molecules in their 5'-ends. Together with TRMT10C/MRPP1, forms a subcomplex of the mitochondrial ribonuclease P, named MRPP1-MRPP2 subcomplex, which displays functions that are independent of the ribonuclease P activity. The MRPP1-MRPP2 subcomplex catalyzes the formation of N(1)-methylguanine and N(1)-methyladenine at position 9 (m1G9 and m1A9, respectively) in tRNAs; HSD17B10/MRPP2 acting as a non-catalytic subunit. The MRPP1-MRPP2 subcomplex also acts as a tRNA maturation platform: following 5'-end cleavage by the mitochondrial ribonuclease P complex, the MRPP1-MRPP2 subcomplex enhances the efficiency of 3'-processing catalyzed by ELAC2, retains the tRNA product after ELAC2 processing and presents the nascent tRNA to the mitochondrial CCA tRNA nucleotidyltransferase TRNT1 enzyme. Associates with mitochondrial DNA complexes at the nucleoids to initiate RNA processing and ribosome assembly. The polypeptide is 3-hydroxyacyl-CoA dehydrogenase type-2 (Hsd17b10) (Rattus norvegicus (Rat)).